We begin with the raw amino-acid sequence, 299 residues long: Ribosomal protein L11 methyltransferase (299 aa).

The S-adenosyl-L-methionine site is built by T149, G170, D192, and N234.

It belongs to the methyltransferase superfamily. PrmA family.

The protein localises to the cytoplasm. It catalyses the reaction L-lysyl-[protein] + 3 S-adenosyl-L-methionine = N(6),N(6),N(6)-trimethyl-L-lysyl-[protein] + 3 S-adenosyl-L-homocysteine + 3 H(+). In terms of biological role, methylates ribosomal protein L11. The sequence is that of Ribosomal protein L11 methyltransferase from Chromohalobacter salexigens (strain ATCC BAA-138 / DSM 3043 / CIP 106854 / NCIMB 13768 / 1H11).